Reading from the N-terminus, the 287-residue chain is Orotidine 5'-phosphate decarboxylase (287 aa).

Lys95 functions as the Proton donor in the catalytic mechanism.

This sequence belongs to the OMP decarboxylase family. Type 2 subfamily.

The catalysed reaction is orotidine 5'-phosphate + H(+) = UMP + CO2. It participates in pyrimidine metabolism; UMP biosynthesis via de novo pathway; UMP from orotate: step 2/2. The chain is Orotidine 5'-phosphate decarboxylase from Albidiferax ferrireducens (strain ATCC BAA-621 / DSM 15236 / T118) (Rhodoferax ferrireducens).